An 892-amino-acid chain; its full sequence is Alanine--tRNA ligase (892 aa).

Zn(2+) contacts are provided by histidine 593, histidine 597, cysteine 694, and histidine 698.

It belongs to the class-II aminoacyl-tRNA synthetase family. It depends on Zn(2+) as a cofactor.

The protein resides in the cytoplasm. It carries out the reaction tRNA(Ala) + L-alanine + ATP = L-alanyl-tRNA(Ala) + AMP + diphosphate. Functionally, catalyzes the attachment of alanine to tRNA(Ala) in a two-step reaction: alanine is first activated by ATP to form Ala-AMP and then transferred to the acceptor end of tRNA(Ala). Also edits incorrectly charged Ser-tRNA(Ala) and Gly-tRNA(Ala) via its editing domain. This chain is Alanine--tRNA ligase, found in Helicobacter hepaticus (strain ATCC 51449 / 3B1).